We begin with the raw amino-acid sequence, 106 residues long: Putative protein LRRC37A5P (106 aa).

In Homo sapiens (Human), this protein is Putative protein LRRC37A5P (LRRC37A5P).